Reading from the N-terminus, the 216-residue chain is Refilin-B (216 aa).

The segment at 1-55 (MVGRLSLQDVPELVDTKKKGDGVLDSPDSGLPPSPSPSHWGLAATAGGGGERAPV) is disordered. Ser-6 and Ser-26 each carry phosphoserine.

It belongs to the Refilin family. In terms of assembly, interacts with FLNA and FLNB. Detected in various tissues, with highest expression in lung, followed by spleen.

The protein resides in the cytoplasm. The protein localises to the cytoskeleton. Involved in the regulation of the perinuclear actin network and nuclear shape through interaction with filamins. Plays an essential role in the formation of cartilaginous skeletal elements. The sequence is that of Refilin-B from Mus musculus (Mouse).